Consider the following 625-residue polypeptide: Phosphomethylpyrimidine synthase (625 aa).

Substrate contacts are provided by residues Asn-231, Met-260, Tyr-289, His-325, 345-347 (SRG), 386-389 (DGLR), and Glu-425. Zn(2+) is bound at residue His-429. Position 452 (Tyr-452) interacts with substrate. His-493 is a binding site for Zn(2+). Residues Cys-573, Cys-576, and Cys-581 each coordinate [4Fe-4S] cluster.

This sequence belongs to the ThiC family. As to quaternary structure, homodimer. Requires [4Fe-4S] cluster as cofactor.

The catalysed reaction is 5-amino-1-(5-phospho-beta-D-ribosyl)imidazole + S-adenosyl-L-methionine = 4-amino-2-methyl-5-(phosphooxymethyl)pyrimidine + CO + 5'-deoxyadenosine + formate + L-methionine + 3 H(+). Its pathway is cofactor biosynthesis; thiamine diphosphate biosynthesis. Its function is as follows. Catalyzes the synthesis of the hydroxymethylpyrimidine phosphate (HMP-P) moiety of thiamine from aminoimidazole ribotide (AIR) in a radical S-adenosyl-L-methionine (SAM)-dependent reaction. This Acinetobacter baumannii (strain SDF) protein is Phosphomethylpyrimidine synthase.